Reading from the N-terminus, the 541-residue chain is 2-hydroxyacylsphingosine 1-beta-galactosyltransferase (541 aa).

The first 20 residues, 1-20 (MKSYTPYFILLWSAVGIAKA), serve as a signal peptide directing secretion. N-linked (GlcNAc...) asparagine glycosylation is found at Asn78, Asn333, and Asn442. Residues 472 to 492 (YFLLDIAFVLLLGAALLYFLL) form a helical membrane-spanning segment.

Belongs to the UDP-glycosyltransferase family.

It localises to the membrane. The protein localises to the endoplasmic reticulum. The catalysed reaction is an N-acylsphing-4-enine + UDP-alpha-D-galactose = a beta-D-galactosyl-(1&lt;-&gt;1')-N-acylsphing-4-enine + UDP + H(+). It carries out the reaction an N-acyl-sphingoid base + UDP-alpha-D-galactose = a D-galactosylceramide + UDP + H(+). It catalyses the reaction N-(2-hydroxy-hexanoyl)-sphing-4-enine + UDP-alpha-D-galactose = N-(2-hydroxy-hexanoyl)-beta-D-galactosyl-sphing-4-enine + UDP + H(+). The enzyme catalyses N-(2-hydroxy-hexanoyl)-sphinganine + UDP-alpha-D-galactose = N-(2-hydroxyhexanoyl)-beta-D-galactosylsphinganine + UDP + H(+). It functions in the pathway sphingolipid metabolism; galactosylceramide biosynthesis. Its function is as follows. Catalyzes the transfer of galactose to ceramide, a key enzymatic step in the biosynthesis of galactocerebrosides, which are abundant sphingolipids of the myelin membrane of the central nervous system and peripheral nervous system. Galactosylates both hydroxy- and non-hydroxy fatty acid-containing ceramides and diglycerides. The sequence is that of 2-hydroxyacylsphingosine 1-beta-galactosyltransferase from Homo sapiens (Human).